A 428-amino-acid polypeptide reads, in one-letter code: L-rhamnonate dehydratase (428 aa).

H56 and R82 together coordinate substrate. Mg(2+) contacts are provided by D249, E275, and E303. Residue H352 is the Proton acceptor of the active site. Position 372 (E372) interacts with substrate.

It belongs to the mandelate racemase/muconate lactonizing enzyme family. RhamD subfamily. In terms of assembly, homooctamer; tetramer of dimers. It depends on Mg(2+) as a cofactor.

It carries out the reaction L-rhamnonate = 2-dehydro-3-deoxy-L-rhamnonate + H2O. Functionally, catalyzes the dehydration of L-rhamnonate to 2-keto-3-deoxy-L-rhamnonate (KDR). This is L-rhamnonate dehydratase from Shigella sonnei (strain Ss046).